The following is a 316-amino-acid chain: Melanocyte-stimulating hormone receptor (316 aa).

Over 1–37 (MAVQGSQRRLLGSLNSTPTAIPQLGLAANQTGARCLE) the chain is Extracellular. N-linked (GlcNAc...) asparagine glycosylation occurs at N29. Residues 38–63 (VSIPDGLFLSLGLVSLVENVLVVATI) form a helical membrane-spanning segment. Residues 64–72 (AKNRNLHSP) lie on the Cytoplasmic side of the membrane. The helical transmembrane segment at 73 to 93 (MYCFICCLALSDLLVSGSNVV) threads the bilayer. Over 94 to 117 (DTLLLLLEAGALAARAAVLQQLDN) the chain is Extracellular. The helical transmembrane segment at 118-139 (VIDVITCSSMLSSLCFLGAIAV) threads the bilayer. Topologically, residues 140–162 (DRYISIFYALRYRSIVTLPRARR) are cytoplasmic. The chain crosses the membrane as a helical span at residues 163–182 (AVAAIWVASVLFSTLFIAYY). The Extracellular portion of the chain corresponds to 183 to 190 (DHTAVLLC). A helical membrane pass occupies residues 191-210 (LVVFFLAMLVLMAVLYVHML). Residues 211-239 (ARACQHAQGIARLHKRQRPVHKGFGLKGP) are Cytoplasmic-facing. A helical transmembrane segment spans residues 240–265 (VTLTILLGIFFLCWGPFFLHLTLIVL). The Extracellular portion of the chain corresponds to 266-278 (CPEHPTCGCIFKN). Residues 279–299 (FNLFLALIICNAIIDPLIYAF) form a helical membrane-spanning segment. Residues 300-316 (HSQELRRTLKEVLTCSW) are Cytoplasmic-facing. Residue C314 is the site of S-palmitoyl cysteine attachment.

This sequence belongs to the G-protein coupled receptor 1 family. In terms of assembly, interacts with MGRN1, but does not undergo MGRN1-mediated ubiquitination; this interaction competes with GNAS-binding and thus inhibits agonist-induced cAMP production. Interacts with OPN3; the interaction results in a decrease in MC1R-mediated cAMP signaling and ultimately a decrease in melanin production in melanocytes.

Its subcellular location is the cell membrane. Functionally, receptor for MSH (alpha, beta and gamma) and ACTH. The activity of this receptor is mediated by G proteins which activate adenylate cyclase. Mediates melanogenesis, the production of eumelanin (black/brown) and phaeomelanin (red/yellow), via regulation of cAMP signaling in melanocytes. The chain is Melanocyte-stimulating hormone receptor (MC1R) from Gorilla gorilla gorilla (Western lowland gorilla).